The chain runs to 347 residues: Methylthioribose-1-phosphate isomerase (347 aa).

Substrate contacts are provided by residues R47 to A49, R90, and Q199. D240 serves as the catalytic Proton donor. N250–K251 serves as a coordination point for substrate.

This sequence belongs to the eIF-2B alpha/beta/delta subunits family. MtnA subfamily.

The enzyme catalyses 5-(methylsulfanyl)-alpha-D-ribose 1-phosphate = 5-(methylsulfanyl)-D-ribulose 1-phosphate. It functions in the pathway amino-acid biosynthesis; L-methionine biosynthesis via salvage pathway; L-methionine from S-methyl-5-thio-alpha-D-ribose 1-phosphate: step 1/6. Functionally, catalyzes the interconversion of methylthioribose-1-phosphate (MTR-1-P) into methylthioribulose-1-phosphate (MTRu-1-P). This is Methylthioribose-1-phosphate isomerase from Natranaerobius thermophilus (strain ATCC BAA-1301 / DSM 18059 / JW/NM-WN-LF).